Reading from the N-terminus, the 816-residue chain is Sucrose synthase 2 (816 aa).

The tract at residues 280 to 757 (MVLNVVILSP…GLQRIEEKYT (478 aa)) is GT-B glycosyltransferase.

Belongs to the glycosyltransferase 1 family. Plant sucrose synthase subfamily. Forms homotetramers and heterotetramers with SS1, all three possible heterotetramers are formed. Abundant in developing endosperm, low in aleurone, and undetected in coleoptiles and roots. Also detected in crude extracts of anthers and in immature embryos.

The enzyme catalyses an NDP-alpha-D-glucose + D-fructose = a ribonucleoside 5'-diphosphate + sucrose + H(+). Functionally, sucrose-cleaving enzyme that provides UDP-glucose and fructose for various metabolic pathways. In Hordeum vulgare (Barley), this protein is Sucrose synthase 2 (SS2).